The sequence spans 283 residues: Bifunctional protein FolD (283 aa).

Residues 165-167 (GAS) and serine 190 contribute to the NADP(+) site.

The protein belongs to the tetrahydrofolate dehydrogenase/cyclohydrolase family. In terms of assembly, homodimer.

It catalyses the reaction (6R)-5,10-methylene-5,6,7,8-tetrahydrofolate + NADP(+) = (6R)-5,10-methenyltetrahydrofolate + NADPH. It carries out the reaction (6R)-5,10-methenyltetrahydrofolate + H2O = (6R)-10-formyltetrahydrofolate + H(+). Its pathway is one-carbon metabolism; tetrahydrofolate interconversion. Its function is as follows. Catalyzes the oxidation of 5,10-methylenetetrahydrofolate to 5,10-methenyltetrahydrofolate and then the hydrolysis of 5,10-methenyltetrahydrofolate to 10-formyltetrahydrofolate. This Cupriavidus taiwanensis (strain DSM 17343 / BCRC 17206 / CCUG 44338 / CIP 107171 / LMG 19424 / R1) (Ralstonia taiwanensis (strain LMG 19424)) protein is Bifunctional protein FolD.